The following is a 185-amino-acid chain: Ribonuclease M5 (185 aa).

The 82-residue stretch at 3 to 84 (KEVIVVEGRD…KHARISQSEG (82 aa)) folds into the Toprim domain. Glutamate 9, aspartate 55, and aspartate 57 together coordinate Mg(2+).

This sequence belongs to the ribonuclease M5 family. It depends on Mg(2+) as a cofactor.

It localises to the cytoplasm. It carries out the reaction Endonucleolytic cleavage of RNA, removing 21 and 42 nucleotides, respectively, from the 5'- and 3'-termini of a 5S-rRNA precursor.. Its function is as follows. Required for correct processing of both the 5' and 3' ends of 5S rRNA precursor. Cleaves both sides of a double-stranded region yielding mature 5S rRNA in one step. The chain is Ribonuclease M5 from Clostridium acetobutylicum (strain ATCC 824 / DSM 792 / JCM 1419 / IAM 19013 / LMG 5710 / NBRC 13948 / NRRL B-527 / VKM B-1787 / 2291 / W).